A 337-amino-acid chain; its full sequence is Tetraacyldisaccharide 4'-kinase (337 aa).

56 to 63 (VAGGAGKT) is a binding site for ATP.

The protein belongs to the LpxK family.

The catalysed reaction is a lipid A disaccharide + ATP = a lipid IVA + ADP + H(+). It functions in the pathway glycolipid biosynthesis; lipid IV(A) biosynthesis; lipid IV(A) from (3R)-3-hydroxytetradecanoyl-[acyl-carrier-protein] and UDP-N-acetyl-alpha-D-glucosamine: step 6/6. Its function is as follows. Transfers the gamma-phosphate of ATP to the 4'-position of a tetraacyldisaccharide 1-phosphate intermediate (termed DS-1-P) to form tetraacyldisaccharide 1,4'-bis-phosphate (lipid IVA). The sequence is that of Tetraacyldisaccharide 4'-kinase from Rhodospirillum centenum (strain ATCC 51521 / SW).